Reading from the N-terminus, the 148-residue chain is Urease accessory protein UreE (148 aa).

Belongs to the UreE family.

It localises to the cytoplasm. Involved in urease metallocenter assembly. Binds nickel. Probably functions as a nickel donor during metallocenter assembly. This is Urease accessory protein UreE from Nostoc punctiforme (strain ATCC 29133 / PCC 73102).